A 113-amino-acid chain; its full sequence is Protein CTLA-2-beta (113 aa).

Repeat copies occupy residues 15–17 (EWK) and 18–20 (EWK). The interval 15–20 (EWKEWK) is 2 X 3 AA tandem repeats of E-W-K.

To the propeptide regions of cysteine proteases.

In terms of biological role, not known, expressed in activated T-cell. This chain is Protein CTLA-2-beta (Ctla2b), found in Mus musculus (Mouse).